The primary structure comprises 1071 residues: Serine/threonine-protein phosphatase 6 regulatory ankyrin repeat subunit C (1071 aa).

28 ANK repeats span residues 7-36 (SDQP…EVNA), 40-69 (ERRT…NVNA), 73-102 (VWLT…DVTA), 106-135 (YWQT…SLNM), 139-168 (TGRA…NLSA), 172-201 (KDRQ…DKSC), 205-234 (RGYT…EIDE), 238-267 (FGNT…NVNQ), 271-301 (RGYT…DVNM), 305-334 (EGKS…EIDC), 338-367 (YGNT…DTAR), 371-400 (HGMF…LYSI), 422-451 (FGRT…DMNK), 455-484 (FGRT…EVNE), 488-539 (SGCT…DPCL), 543-573 (KGYS…TLGD), 578-607 (GSIS…CVDV), 611-640 (VGRS…SCLL), 645-674 (SKWG…GADL), 681-710 (EGQT…CPDM), 714-743 (RGRT…SVLS), 747-776 (QGRS…HSQP), 784-814 (HGYT…SIQE), 816-845 (NPFT…CNSL), 852-881 (KGRT…DIDA), 885-915 (SGRS…DLSL), 919-951 (NKNT…LINA), and 955-984 (MLQM…TVLA).

Protein phosphatase 6 (PP6) holoenzyme is proposed to be a heterotrimeric complex formed by the catalytic subunit, a SAPS domain-containing subunit (PP6R) and an ankyrin repeat-domain containing regulatory subunit (ARS).

Functionally, putative regulatory subunit of protein phosphatase 6 (PP6) that may be involved in the recognition of phosphoprotein substrates. This is Serine/threonine-protein phosphatase 6 regulatory ankyrin repeat subunit C (ankrd52) from Danio rerio (Zebrafish).